We begin with the raw amino-acid sequence, 332 residues long: Tsukubadiene synthase (332 aa).

Residues Asp-75 and Glu-80 each contribute to the Mg(2+) site. Positions Asp-75–Glu-80 match the DDXXXE motif motif. Arg-165 contributes to the substrate binding site. The Mg(2+) site is built by Ser-212, Ser-216, and Glu-220. An SXXXSXXXE motif motif is present at residues Ser-212 to Glu-220. Arg-298–Tyr-299 lines the substrate pocket.

The protein belongs to the terpene synthase family. Mg(2+) is required as a cofactor.

The enzyme catalyses (2E,6E,10E)-geranylgeranyl diphosphate = tsukubadiene + diphosphate. Functionally, catalyzes the formation of the 5-9-5 ring skeleton (3S,6S,11R,14S)-tsukubadiene from geranylgeranyl diphosphate (GGPP) via a 1,11-cyclization and a 10Re,14Re-cyclization. The protein is Tsukubadiene synthase of Streptomyces tsukubensis (strain DSM 42081 / NBRC 108919 / NRRL 18488 / 9993).